Reading from the N-terminus, the 902-residue chain is Ephrin type-B receptor 1-B (902 aa).

Residues His1–Gln119 form the Eph LBD domain. The Extracellular portion of the chain corresponds to His1 to Leu459. 2 Fibronectin type-III domains span residues Val240–Ala350 and Ala351–Asp448. Asn252, Asn344, and Asn398 each carry an N-linked (GlcNAc...) asparagine glycan. The helical transmembrane segment at Ile460–Val480 threads the bilayer. Over Cys481 to Ala902 the chain is Cytoplasmic. The Protein kinase domain maps to Val537–Ile800. ATP contacts are provided by residues Ile543 to Val551 and Lys569. Asp662 acts as the Proton acceptor in catalysis. Positions Ser829–Gln893 constitute an SAM domain. The PDZ-binding signature appears at Ser900 to Ala902.

This sequence belongs to the protein kinase superfamily. Tyr protein kinase family. Ephrin receptor subfamily. In terms of assembly, heterotetramer upon binding of the ligand. The heterotetramer is composed of an ephrin dimer and a receptor dimer. Oligomerization is probably required to induce biological responses. Post-translationally, phosphorylated. Autophosphorylation is stimulated by ligands. In terms of tissue distribution, expressed in the embryo in the brain and spinal cord and in the first and fourth visceral arches. Most abundant in adult brain, with lower levels in eye, heart, ovary, oviduct, lung and pharynx.

It localises to the cell membrane. The protein resides in the early endosome membrane. Its subcellular location is the cell projection. The protein localises to the dendrite. It catalyses the reaction L-tyrosyl-[protein] + ATP = O-phospho-L-tyrosyl-[protein] + ADP + H(+). Functionally, receptor tyrosine kinase which binds promiscuously transmembrane ephrin-B family ligands residing on adjacent cells, leading to contact-dependent bidirectional signaling into neighboring cells. The signaling pathway downstream of the receptor is referred to as forward signaling while the signaling pathway downstream of the ephrin ligand is referred to as reverse signaling. May play a role in axon guidance during nervous system development. May also play an important redundant role with other ephrin-B receptors in development and maturation of dendritic spines and synapse formation. More generally, may play a role in targeted cell migration and adhesion. Upon activation by ephrin-B ligands activates the MAPK/ERK and the JNK signaling cascades to regulate cell migration and adhesion respectively. This Xenopus laevis (African clawed frog) protein is Ephrin type-B receptor 1-B (ephb1-b).